A 460-amino-acid polypeptide reads, in one-letter code: ATP synthase subunit beta (460 aa).

150–157 (GGAGVGKT) contributes to the ATP binding site.

The protein belongs to the ATPase alpha/beta chains family. In terms of assembly, F-type ATPases have 2 components, CF(1) - the catalytic core - and CF(0) - the membrane proton channel. CF(1) has five subunits: alpha(3), beta(3), gamma(1), delta(1), epsilon(1). CF(0) has three main subunits: a(1), b(2) and c(9-12). The alpha and beta chains form an alternating ring which encloses part of the gamma chain. CF(1) is attached to CF(0) by a central stalk formed by the gamma and epsilon chains, while a peripheral stalk is formed by the delta and b chains.

The protein localises to the cell inner membrane. It carries out the reaction ATP + H2O + 4 H(+)(in) = ADP + phosphate + 5 H(+)(out). Its function is as follows. Produces ATP from ADP in the presence of a proton gradient across the membrane. The catalytic sites are hosted primarily by the beta subunits. This Salmonella agona (strain SL483) protein is ATP synthase subunit beta.